A 430-amino-acid polypeptide reads, in one-letter code: Histidinol dehydrogenase (430 aa).

Residues Tyr130, Gln191, and Asn214 each coordinate NAD(+). Ser237, Gln259, and His262 together coordinate substrate. Residues Gln259 and His262 each coordinate Zn(2+). Active-site proton acceptor residues include Glu327 and His328. His328, Asp361, Glu415, and His420 together coordinate substrate. Asp361 serves as a coordination point for Zn(2+). His420 contacts Zn(2+).

It belongs to the histidinol dehydrogenase family. Zn(2+) serves as cofactor.

It catalyses the reaction L-histidinol + 2 NAD(+) + H2O = L-histidine + 2 NADH + 3 H(+). The protein operates within amino-acid biosynthesis; L-histidine biosynthesis; L-histidine from 5-phospho-alpha-D-ribose 1-diphosphate: step 9/9. Catalyzes the sequential NAD-dependent oxidations of L-histidinol to L-histidinaldehyde and then to L-histidine. The protein is Histidinol dehydrogenase of Brucella melitensis biotype 1 (strain ATCC 23456 / CCUG 17765 / NCTC 10094 / 16M).